Here is a 49-residue protein sequence, read N- to C-terminus: Disintegrin echistatin-gamma (49 aa).

The Disintegrin domain maps to 1–47; the sequence is DCASGPCCRDCKFLEEGTICNMARGDDMDDYCNGKTCDCPRNPHKWP. Intrachain disulfides connect Cys-2–Cys-11, Cys-7–Cys-32, Cys-8–Cys-37, and Cys-20–Cys-39. The Cell attachment site motif lies at 24-26; the sequence is RGD.

The protein belongs to the venom metalloproteinase (M12B) family. P-II subfamily. P-IIa sub-subfamily. Monomer. As to expression, expressed by the venom gland.

Its subcellular location is the secreted. Functionally, has antiplatelet activities on guinea pig, followed by human, rabbit and rat platelet-rich plasma. This is Disintegrin echistatin-gamma from Echis pyramidum leakeyi (Leakey's carpet viper).